Reading from the N-terminus, the 74-residue chain is Small ribosomal subunit protein bS18 (74 aa).

Belongs to the bacterial ribosomal protein bS18 family. In terms of assembly, part of the 30S ribosomal subunit. Forms a tight heterodimer with protein bS6.

Binds as a heterodimer with protein bS6 to the central domain of the 16S rRNA, where it helps stabilize the platform of the 30S subunit. The chain is Small ribosomal subunit protein bS18 from Zymomonas mobilis subsp. mobilis (strain ATCC 31821 / ZM4 / CP4).